Reading from the N-terminus, the 1735-residue chain is Inactive tyrosine-protein kinase PEAK1 (1735 aa).

Disordered regions lie at residues leucine 26–alanine 66 and leucine 111–asparagine 145. Polar residues-rich tracts occupy residues leucine 111–glutamate 121 and aspartate 130–asparagine 145. The residue at position 282 (serine 282) is a Phosphoserine. Disordered stretches follow at residues asparagine 324 to valine 410, glycine 491 to glycine 514, and serine 537 to isoleucine 580. Low complexity predominate over residues serine 325–serine 336. Over residues threonine 337–valine 365 the composition is skewed to polar residues. Residues asparagine 367–serine 378 show a composition bias toward low complexity. A compositionally biased stretch (polar residues) spans threonine 384–glycine 393. Low complexity predominate over residues serine 498–proline 509. 3 positions are modified to phosphoserine: serine 537, serine 569, and serine 584. Over residues alanine 566–isoleucine 580 the composition is skewed to polar residues. Phosphotyrosine occurs at positions 632 and 638. Residue serine 645 is modified to Phosphoserine. Tyrosine 662 carries the post-translational modification Phosphotyrosine. Disordered stretches follow at residues glutamate 663–alanine 762, proline 800–alanine 919, and arginine 1019–tyrosine 1097. Composition is skewed to polar residues over residues glutamine 704–threonine 735, alanine 745–serine 757, and leucine 819–alanine 839. Serine 824 and serine 825 each carry phosphoserine. Residues threonine 847 to serine 863 are compositionally biased toward low complexity. Pro residues predominate over residues glutamate 864–arginine 873. A compositionally biased stretch (polar residues) spans tyrosine 879–serine 901. Phosphoserine is present on serine 897. 2 stretches are compositionally biased toward basic and acidic residues: residues threonine 902–alanine 919 and alanine 1037–arginine 1055. Over residues glutamate 1076–aspartate 1086 the composition is skewed to acidic residues. Threonine 1141 carries the phosphothreonine modification. Position 1177 is a phosphotyrosine (tyrosine 1177). Positions glutamate 1274–alanine 1300 are required for homodimerization. The Protein kinase domain occupies glutamine 1302 to phenylalanine 1664. Serine 1363 is modified (phosphoserine). Residues tryptophan 1394 to arginine 1445 are disordered. The interval proline 1659–leucine 1732 is required for homodimerization.

The protein belongs to the protein kinase superfamily. As to quaternary structure, homodimer. Interacts with BCAR1 and CRK. Interacts with PRAG1. Interacts (when phosphorylated at Tyr-1177) with SHC1 (via PID domain). Found in a complex with PPP1CA, PPP1CC and SHC1. Interacts (when phosphorylated at Tyr-632) with tensin TNS3 (when phosphorylated on the SH2 domain); TNS3 also interacts with integrins ITGB1, ITGB3 and ITGB5 and mediates their association with PEAK1. Phosphorylated on tyrosine in a CSK-dependent manner in response to adhesion to fibronectin and to EGF stimulation. Phosphorylation at Tyr-662 by a Src family kinase controls subcellular localization to focal adhesion and focal adhesion dynamics. Phosphorylation at Tyr-1177 is essential for binding to SHC1. Phosphorylation at Tyr-632 promotes interaction with tensin TNS3.

It localises to the cytoplasm. The protein localises to the cytoskeleton. Its subcellular location is the cell junction. It is found in the focal adhesion. Its function is as follows. Probable catalytically inactive kinase. Scaffolding protein that regulates the cytoskeleton to control cell spreading and migration by modulating focal adhesion dynamics. Acts as a scaffold for mediating EGFR signaling. The chain is Inactive tyrosine-protein kinase PEAK1 (Peak1) from Mus musculus (Mouse).